A 745-amino-acid chain; its full sequence is Arf-GAP with coiled-coil, ANK repeat and PH domain-containing protein 1 (745 aa).

A BAR domain is found at methionine 1–glutamine 226. The required for formation of endosomal tubules when overexpressed with PIP5K1C stretch occupies residues methionine 1–leucine 382. Positions glycine 265 to alanine 360 constitute a PH domain. The Arf-GAP domain maps to glycine 405–arginine 527. A required for interaction with GULP1 region spans residues glycine 405–leucine 745. The C4-type zinc finger occupies cysteine 420 to cysteine 443. Position 485 is a 3'-nitrotyrosine (tyrosine 485). Positions glutamate 525–leucine 567 are prevents interaction with ITGB1 when S-554 is not phosphorylated. The tract at residues glutamate 525–serine 569 is disordered. Positions arginine 537–proline 546 are enriched in pro residues. Residue serine 555 is modified to Phosphoserine; by PKB. ANK repeat units follow at residues glutamate 607–glutamine 640, glutamine 644–valine 673, and glutamate 677–alanine 707.

As to quaternary structure, banana-shaped homodimer laterally assembling into tetramers, the tetramers further pack helically onto the membrane. Interacts with GTP-bound ARF6. Interacts with third cytoplasmic loop of SLC2A4/GLUT4. Interacts with CLTC. Interacts with GULP1. Forms a complex with GDP-bound ARF6 and GULP1. Interacts with ITGB1; required for ITGB1 recycling. Phosphorylation at Ser-555 by PKB is required for interaction with ITGB1, export of ITGB1 from recycling endosomes to the cell surface and ITGB1-dependent cell migration.

It localises to the recycling endosome membrane. GAP activity stimulated by phosphatidylinositol 4,5-bisphosphate (PIP2) and phosphatidic acid. In terms of biological role, GTPase-activating protein (GAP) for ADP ribosylation factor 6 (ARF6) required for clathrin-dependent export of proteins from recycling endosomes to trans-Golgi network and cell surface. Required for regulated export of ITGB1 from recycling endosomes to the cell surface and ITGB1-dependent cell migration. The polypeptide is Arf-GAP with coiled-coil, ANK repeat and PH domain-containing protein 1 (ACAP1) (Bos taurus (Bovine)).